Reading from the N-terminus, the 63-residue chain is Bowman-Birk type proteinase inhibitor (63 aa).

7 disulfides stabilise this stretch: Cys7–Cys60, Cys8–Cys23, Cys11–Cys56, Cys13–Cys21, Cys30–Cys37, Cys34–Cys49, and Cys39–Cys47.

As to quaternary structure, monomer.

Functionally, inhibits trypsin stoichiometrically at the molar ratio of 1:2, with a dissociation constant of 4.2 nM. Does not inhibit chymotrypsin. The chain is Bowman-Birk type proteinase inhibitor from Lupinus albus (White lupine).